The chain runs to 70 residues: DNA-directed RNA polymerase subunit omega (70 aa).

This sequence belongs to the RNA polymerase subunit omega family. In terms of assembly, the RNAP catalytic core consists of 2 alpha, 1 beta, 1 beta' and 1 omega subunit. When a sigma factor is associated with the core the holoenzyme is formed, which can initiate transcription.

The enzyme catalyses RNA(n) + a ribonucleoside 5'-triphosphate = RNA(n+1) + diphosphate. Its function is as follows. Promotes RNA polymerase assembly. Latches the N- and C-terminal regions of the beta' subunit thereby facilitating its interaction with the beta and alpha subunits. The sequence is that of DNA-directed RNA polymerase subunit omega from Bacillus anthracis.